The following is a 485-amino-acid chain: Zinc finger protein 639 (485 aa).

Over residues 1 to 14 (MSEYPKKRKRKTLH) the composition is skewed to basic residues. Disordered regions lie at residues 1–23 (MSEY…DSSG) and 54–82 (DNKD…SRSQ). Serine 60 is modified (phosphoserine). Lysine 76 participates in a covalent cross-link: Glycyl lysine isopeptide (Lys-Gly) (interchain with G-Cter in SUMO2). Residue serine 88 is modified to Phosphoserine. Residues lysine 177, lysine 181, and lysine 226 each participate in a glycyl lysine isopeptide (Lys-Gly) (interchain with G-Cter in SUMO2) cross-link. C2H2-type zinc fingers lie at residues 204–227 (YKCE…ILKH), 233–255 (NVCR…AKLH), 260–283 (YICK…ADTH), 289–311 (YWCE…FQEH), 374–397 (FVCQ…AIEH), 403–425 (HVCD…LNSH), 431–454 (YLCQ…DFKH), and 460–482 (HKCS…LPVH). The segment at 371-455 (KNFFVCQVCG…LKIHLDFKHS (85 aa)) is interaction with CTNNA2.

This sequence belongs to the krueppel C2H2-type zinc-finger protein family. In terms of assembly, interacts with CTNNA2.

It is found in the nucleus. Binds DNA and may function as a transcriptional repressor. This Rattus norvegicus (Rat) protein is Zinc finger protein 639 (Znf639).